The primary structure comprises 311 residues: Glycosyltransferase 6 domain-containing protein 1 (311 aa).

Residues 1 to 5 (MKAKR) are Cytoplasmic-facing. A helical; Signal-anchor for type II membrane protein transmembrane segment spans residues 6–26 (RILLQLLTFCLFLLLLAKIHF). Residues 27–311 (RNHQEEELLL…KIAHHPIDTL (285 aa)) lie on the Lumenal side of the membrane. The N-linked (GlcNAc...) asparagine glycan is linked to Asn77. Substrate contacts are provided by residues 85–90 (FAVGSL), 176–178 (NIN), and 198–201 (HPWW). Glu266 acts as the Nucleophile in catalysis.

This sequence belongs to the glycosyltransferase 6 family. It depends on Mn(2+) as a cofactor.

Its subcellular location is the membrane. The chain is Glycosyltransferase 6 domain-containing protein 1 (Glt6d1) from Mus musculus (Mouse).